Reading from the N-terminus, the 1062-residue chain is Probable sucrose-phosphate synthase 3 (1062 aa).

The segment covering 113–122 has biased composition (basic and acidic residues); it reads EREQGRRDAT. Positions 113-141 are disordered; the sequence is EREQGRRDATEDLSEDLSEGEKGDGLGEI. Residues Ser-126, Ser-130, and Ser-156 each carry the phosphoserine modification. The disordered stretch occupies residues 715–735; it reads MDGDKPSLNGSLEPNSADPVK.

It belongs to the glycosyltransferase 1 family. As to quaternary structure, homodimer or homotetramer.

It carries out the reaction beta-D-fructose 6-phosphate + UDP-alpha-D-glucose = sucrose 6(F)-phosphate + UDP + H(+). It functions in the pathway glycan biosynthesis; sucrose biosynthesis; sucrose from D-fructose 6-phosphate and UDP-alpha-D-glucose: step 1/2. Activity is regulated by phosphorylation and moderated by concentration of metabolites and light. Its function is as follows. Plays a role in photosynthetic sucrose synthesis by catalyzing the rate-limiting step of sucrose biosynthesis from UDP-glucose and fructose- 6-phosphate. Involved in the regulation of carbon partitioning in the leaves of plants. May regulate the synthesis of sucrose and therefore play a major role as a limiting factor in the export of photoassimilates out of the leaf. Plays a role for sucrose availability that is essential for plant growth and fiber elongation. This chain is Probable sucrose-phosphate synthase 3 (SPS3), found in Arabidopsis thaliana (Mouse-ear cress).